The sequence spans 571 residues: Calcium-dependent protein kinase 16 (571 aa).

The tract at residues 1–74 (MGLCFSSAAK…TRHTPPHGKV (74 aa)) is disordered. Glycine 2 is lipidated: N-myristoyl glycine. Residue cysteine 4 is the site of S-palmitoyl cysteine attachment. The segment covering 63 to 72 (TPTRHTPPHG) has biased composition (basic residues). The 261-residue stretch at 108–368 (YTIGKLLGHG…AAQALSHPWV (261 aa)) folds into the Protein kinase domain. ATP is bound by residues 114–122 (LGHGQFGYT) and lysine 137. Aspartate 234 (proton acceptor) is an active-site residue. Residue serine 274 is modified to Phosphoserine. Residues 374–404 (ASEIPIDISVLNNMRQFVKFSRLKQFALRAL) form an autoinhibitory domain region. EF-hand domains are found at residues 411–446 (EELA…DHPW), 448–483 (LKDA…VNQL), 490–525 (KWQQ…KGSI), and 528–555 (LLEE…ASIK). Positions 424, 426, 428, 435, 461, 463, 465, 472, 503, 505, 507, 514, 533, 535, 537, and 539 each coordinate Ca(2+). Residue serine 541 is modified to Phosphoserine. A Ca(2+)-binding site is contributed by glutamate 544.

This sequence belongs to the protein kinase superfamily. Ser/Thr protein kinase family. CDPK subfamily.

The protein localises to the cell membrane. Its subcellular location is the nucleus. It carries out the reaction L-seryl-[protein] + ATP = O-phospho-L-seryl-[protein] + ADP + H(+). The catalysed reaction is L-threonyl-[protein] + ATP = O-phospho-L-threonyl-[protein] + ADP + H(+). With respect to regulation, activated by calcium. Autophosphorylation may play an important role in the regulation of the kinase activity. Functionally, may play a role in signal transduction pathways that involve calcium as a second messenger. The sequence is that of Calcium-dependent protein kinase 16 (CPK16) from Arabidopsis thaliana (Mouse-ear cress).